Here is a 355-residue protein sequence, read N- to C-terminus: Tetraacyldisaccharide 4'-kinase (355 aa).

54 to 61 lines the ATP pocket; that stretch reads TVGGAGKT.

It belongs to the LpxK family.

The enzyme catalyses a lipid A disaccharide + ATP = a lipid IVA + ADP + H(+). It functions in the pathway glycolipid biosynthesis; lipid IV(A) biosynthesis; lipid IV(A) from (3R)-3-hydroxytetradecanoyl-[acyl-carrier-protein] and UDP-N-acetyl-alpha-D-glucosamine: step 6/6. Its function is as follows. Transfers the gamma-phosphate of ATP to the 4'-position of a tetraacyldisaccharide 1-phosphate intermediate (termed DS-1-P) to form tetraacyldisaccharide 1,4'-bis-phosphate (lipid IVA). This chain is Tetraacyldisaccharide 4'-kinase, found in Rhizobium rhizogenes (strain K84 / ATCC BAA-868) (Agrobacterium radiobacter).